We begin with the raw amino-acid sequence, 413 residues long: DnaJ protein homolog (413 aa).

Residues N10–D75 form the J domain. A CR-type zinc finger spans residues G133–K217. CXXCXGXG motif repeat units lie at residues C146–G153, C162–G169, C189–G196, and C205–K212. The tract at residues R387–Q413 is disordered. Residue C410 is modified to Cysteine methyl ester. A lipid anchor (S-farnesyl cysteine) is attached at C410. Residues A411 to Q413 constitute a propeptide, removed in mature form.

As to expression, expressed in seedlings in all tissues, but exceedingly high levels in hypocotyledons and roots.

It is found in the cell membrane. In terms of biological role, plays a continuous role in plant development probably in the structural organization of compartments. This chain is DnaJ protein homolog (DNAJ1), found in Cucumis sativus (Cucumber).